Consider the following 385-residue polypeptide: uncharacterized protein (385 aa).

This is an uncharacterized protein from Caenorhabditis elegans.